Here is a 536-residue protein sequence, read N- to C-terminus: Chaperonin GroEL 2 (536 aa).

ATP is bound by residues 29-32 (TLGP), Lys50, Gly416, and Asp497.

It belongs to the chaperonin (HSP60) family. As to quaternary structure, forms a cylinder of 14 subunits composed of two heptameric rings stacked back-to-back. Interacts with the co-chaperonin GroES.

It localises to the cytoplasm. It catalyses the reaction ATP + H2O + a folded polypeptide = ADP + phosphate + an unfolded polypeptide.. Its function is as follows. Together with its co-chaperonin GroES, plays an essential role in assisting protein folding. The GroEL-GroES system forms a nano-cage that allows encapsulation of the non-native substrate proteins and provides a physical environment optimized to promote and accelerate protein folding. The protein is Chaperonin GroEL 2 of Chlamydia caviae (strain ATCC VR-813 / DSM 19441 / 03DC25 / GPIC) (Chlamydophila caviae).